The chain runs to 338 residues: L-serine dehydratase (338 aa).

The residue at position 39 (lysine 39) is an N6-(pyridoxal phosphate)lysine.

This sequence belongs to the serine/threonine dehydratase family. Pyridoxal 5'-phosphate serves as cofactor.

Its subcellular location is the cytoplasm. The catalysed reaction is L-serine = pyruvate + NH4(+). The protein operates within carbohydrate biosynthesis; gluconeogenesis. This chain is L-serine dehydratase (SDL1), found in Saccharomyces cerevisiae (strain RM11-1a) (Baker's yeast).